Consider the following 130-residue polypeptide: Small ribosomal subunit protein uS9 (130 aa).

The protein belongs to the universal ribosomal protein uS9 family.

The chain is Small ribosomal subunit protein uS9 from Herminiimonas arsenicoxydans.